Consider the following 424-residue polypeptide: Translation initiation factor 2 subunit gamma (424 aa).

A tr-type G domain is found at 23 to 220 (LPEVNIGLVG…AIEETIPTPE (198 aa)). Positions 32–39 (GHVDHGKT) are G1. Mg(2+) contacts are provided by Asp35, Thr39, Gly60, and Ser62. Residue 35 to 40 (DHGKTT) coordinates GTP. The segment at 60 to 64 (GISIK) is G2. The G3 stretch occupies residues 107–110 (DSPG). GTP is bound by residues 163–166 (NKID) and 198–200 (SAQ). The segment at 163-166 (NKID) is G4. The tract at residues 198–200 (SAQ) is G5.

The protein belongs to the TRAFAC class translation factor GTPase superfamily. Classic translation factor GTPase family. EIF2G subfamily. As to quaternary structure, heterotrimer composed of an alpha, a beta and a gamma chain. Mg(2+) serves as cofactor.

The enzyme catalyses GTP + H2O = GDP + phosphate + H(+). Its function is as follows. eIF-2 functions in the early steps of protein synthesis by forming a ternary complex with GTP and initiator tRNA. This is Translation initiation factor 2 subunit gamma from Archaeoglobus fulgidus (strain ATCC 49558 / DSM 4304 / JCM 9628 / NBRC 100126 / VC-16).